Here is a 216-residue protein sequence, read N- to C-terminus: Kynurenine formamidase (216 aa).

Substrate is bound at residue Trp24. The Zn(2+) site is built by His54, His58, and Asp60. The Proton donor/acceptor role is filled by His64. 2 residues coordinate Zn(2+): His164 and Glu176.

This sequence belongs to the Cyclase 1 superfamily. KynB family. As to quaternary structure, homodimer. Zn(2+) is required as a cofactor.

The enzyme catalyses N-formyl-L-kynurenine + H2O = L-kynurenine + formate + H(+). Its pathway is amino-acid degradation; L-tryptophan degradation via kynurenine pathway; L-kynurenine from L-tryptophan: step 2/2. In terms of biological role, catalyzes the hydrolysis of N-formyl-L-kynurenine to L-kynurenine, the second step in the kynurenine pathway of tryptophan degradation. This is Kynurenine formamidase from Erythrobacter litoralis (strain HTCC2594).